A 253-amino-acid polypeptide reads, in one-letter code: uncharacterized protein (253 aa).

The first 25 residues, 1–25 (MRKKKFLSKVSFGSLFLLCGTVLSA), serve as a signal peptide directing secretion. A lipid anchor (N-palmitoyl cysteine) is attached at C26. C26 carries the S-diacylglycerol cysteine lipid modification.

Belongs to the MG439/MG440 family.

The protein localises to the cell membrane. This is an uncharacterized protein from Mycoplasma pneumoniae (strain ATCC 29342 / M129 / Subtype 1) (Mycoplasmoides pneumoniae).